Consider the following 172-residue polypeptide: Acidic proline-rich protein PRP25 (172 aa).

A signal peptide spans 1 to 16 (MLVVLFTAVLLTLSYA). Residues 22–172 (ELQILDQTPN…QQGPPPPGGP (151 aa)) are disordered. Residues 32-44 (QKPPPPGFPPRPP) show a composition bias toward pro residues. A compositionally biased stretch (low complexity) spans 57 to 67 (GPQQSPLQPGK). 2 stretches are compositionally biased toward pro residues: residues 68–137 (PQDP…PQQK) and 145–172 (QGPP…PGGP).

Its subcellular location is the secreted. The protein is Acidic proline-rich protein PRP25 of Rattus norvegicus (Rat).